A 210-amino-acid polypeptide reads, in one-letter code: uncharacterized protein (210 aa).

The next 4 helical transmembrane spans lie at 5–25 (LAYI…TMLV), 50–70 (FWTV…VILF), 75–95 (YLGA…KSMF), and 155–175 (IILA…LVYI).

The protein belongs to the Rht family.

The protein localises to the cell membrane. This is an uncharacterized protein from Bacillus subtilis (strain 168).